We begin with the raw amino-acid sequence, 168 residues long: tRNA-splicing endonuclease (168 aa).

Active-site residues include Tyr107, His114, and Lys145.

It belongs to the tRNA-intron endonuclease family. Archaeal short subfamily. Homotetramer; although the tetramer contains four active sites, only two participate in the cleavage. Therefore, it should be considered as a dimer of dimers.

It carries out the reaction pretRNA = a 3'-half-tRNA molecule with a 5'-OH end + a 5'-half-tRNA molecule with a 2',3'-cyclic phosphate end + an intron with a 2',3'-cyclic phosphate and a 5'-hydroxyl terminus.. Endonuclease that removes tRNA introns. Cleaves pre-tRNA at the 5'- and 3'-splice sites to release the intron. The products are an intron and two tRNA half-molecules bearing 2',3' cyclic phosphate and 5'-OH termini. Recognizes a pseudosymmetric substrate in which 2 bulged loops of 3 bases are separated by a stem of 4 bp. In Thermococcus kodakarensis (strain ATCC BAA-918 / JCM 12380 / KOD1) (Pyrococcus kodakaraensis (strain KOD1)), this protein is tRNA-splicing endonuclease.